A 243-amino-acid chain; its full sequence is 4-phosphopantoate--beta-alanine ligase (243 aa).

ATP-binding positions include Arg15, Arg37, 176 to 178 (DLN), and 182 to 183 (RT).

It belongs to the archaeal phosphopantothenate synthetase family. In terms of assembly, homodimer.

The enzyme catalyses (R)-4-phosphopantoate + beta-alanine + ATP = (R)-4'-phosphopantothenate + AMP + diphosphate + H(+). The protein operates within cofactor biosynthesis; coenzyme A biosynthesis. In terms of biological role, catalyzes the condensation of (R)-4-phosphopantoate and beta-alanine to 4'-phosphopantothenate in the CoA biosynthesis pathway. The protein is 4-phosphopantoate--beta-alanine ligase of Methanospirillum hungatei JF-1 (strain ATCC 27890 / DSM 864 / NBRC 100397 / JF-1).